The chain runs to 294 residues: MVTIDEVAEILSKRSLEYSMINYPDKKEKSIDIIAVNRNKKMIVKILGNKKSSKIKSDLKNIARIGLGIPVIIEDSTEQEIINDRGNILGMNVETFERILDGEKVFLYKTRGGIFVKINSKELKKKREEMGLSLGEVAQALGVSRISIYDYEREDSYVSIDIAEKLVELFGDDILGDVLSGFKVDEKDINLETQTASLSDKIMLNLNEKGYKVVKMNFTAVDIIASKNDKKLLFSVEADNVSKSLRKFNEAKKITSKIKASLIVVVKESKNKKIYEKEDFNTISENEIMNYEFD.

The HTH cro/C1-type domain maps to 123–175; it reads LKKKREEMGLSLGEVAQALGVSRISIYDYEREDSYVSIDIAEKLVELFGDDIL. A DNA-binding region (H-T-H motif) is located at residues 134–153; it reads LGEVAQALGVSRISIYDYER.

The sequence is that of Putative HTH-type transcriptional regulatory protein STK_12680 from Sulfurisphaera tokodaii (strain DSM 16993 / JCM 10545 / NBRC 100140 / 7) (Sulfolobus tokodaii).